The sequence spans 115 residues: U3-lycotoxin-Ls1a (115 aa).

Positions 1 to 20 are cleaved as a signal peptide; that stretch reads MKFVLLFGVFLVTLFSYSSA. Residues 21 to 44 constitute a propeptide that is removed on maturation; that stretch reads EMLDDFGQADEDELLSLIEKEEAR. 4 disulfide bridges follow: cysteine 48-cysteine 63, cysteine 55-cysteine 72, cysteine 62-cysteine 87, and cysteine 74-cysteine 85.

Belongs to the neurotoxin 19 (CSTX) family. 01 subfamily. Expressed by the venom gland.

It localises to the secreted. The chain is U3-lycotoxin-Ls1a from Lycosa singoriensis (Wolf spider).